The primary structure comprises 286 residues: Putative short-chain type dehydrogenase/reductase Rv0148 (286 aa).

11–35 (VTGAGGGLGREYALTLAGEGASVVV) serves as a coordination point for NAD(+). Residue S151 coordinates substrate. Catalysis depends on Y164, which acts as the Proton acceptor. Residue K280 forms an Isoglutamyl lysine isopeptide (Lys-Gln) (interchain with Q-Cter in protein Pup) linkage.

Belongs to the short-chain dehydrogenases/reductases (SDR) family. In terms of processing, pupylated at Lys-280 by the prokaryotic ubiquitin-like protein Pup, which probably leads to its degradation by the proteasome.

The sequence is that of Putative short-chain type dehydrogenase/reductase Rv0148 from Mycobacterium tuberculosis (strain ATCC 25618 / H37Rv).